The primary structure comprises 1783 residues: Trans-splicing factor Raa3, chloroplastic (1783 aa).

A chloroplast-targeting transit peptide spans 1-40; sequence MKADLATAKGSSPAFSAPRTYRARLLSRCLNKCFNTVLVS. 8 disordered regions span residues 97–378, 420–484, 563–610, 652–709, 918–971, 1395–1427, 1476–1506, and 1620–1639; these read ATTH…VGVN, ATSA…VAAQ, ARVG…SATK, STEP…SPAA, AAPT…QRAS, RDAK…QQHQ, PAPA…RRSR, and VKGR…DVQG. The span at 105–118 shows a compositional bias: gly residues; sequence DSGGQGPAAAGGRG. Low complexity-rich tracts occupy residues 126-157, 186-205, and 224-242; these read QAAA…PQRP, AVDA…PAPA, and AGKP…VGPQ. A compositionally biased stretch (basic and acidic residues) spans 256–273; sequence DESHMGLTHRDQGHDERI. Low complexity predominate over residues 277–289; the sequence is AGEAWKAGAVAAP. Polar residues predominate over residues 307 to 316; sequence LASSALGTHS. Low complexity-rich tracts occupy residues 343 to 374, 420 to 436, 577 to 599, 655 to 669, 676 to 709, 928 to 970, and 1403 to 1417; these read SGSS…ITSN, ATSA…SSSS, RPVQ…SQPG, PLAA…ASAS, SSSN…SPAA, SAAA…PQRA, and QSAA…AAQD. Composition is skewed to basic residues over residues 1494 to 1506 and 1620 to 1630; these read KSRR…RRSR and VKGRGRGRRTA. Residues 1713–1772 enclose the RAP domain; sequence LAVGAAAGGAVIRNSRWLLSGAGALRRRLLTHAGWLVVPVRERQWKDLRSAEQQRRVVRE.

In terms of assembly, part of a 1700 kDa complex that includes the precursor RNA to exon 1 and the tscA RNA.

Its subcellular location is the plastid. It is found in the chloroplast stroma. In terms of biological role, required for trans-splicing of exons 1 and 2 of the chloroplast encoded psaA mRNA (a group II intron). May be required for stability of the chloroplast RNA-protein complex in which it is found. In Chlamydomonas reinhardtii (Chlamydomonas smithii), this protein is Trans-splicing factor Raa3, chloroplastic (RAA3).